The primary structure comprises 491 residues: Transmembrane protein 200A (491 aa).

Residues 1–61 (MIATGGVITG…RGKIRLYSPS (61 aa)) lie on the Cytoplasmic side of the membrane. Positions 16–41 (RQDSARSQQHVNLSPSPATQEKKPIR) are disordered. Residues 20–34 (ARSQQHVNLSPSPAT) show a composition bias toward polar residues. Residues 62–82 (GFFLILGVLISIIGIAMAVLG) form a helical membrane-spanning segment. Topologically, residues 83–126 (YWPQKEHFIDAETTLSTNETQVIRNEGGVVVRFFEQHLHSDKMK) are extracellular. A glycan (N-linked (GlcNAc...) asparagine) is linked at asparagine 100. The helical transmembrane segment at 127-147 (MLGPFTMGIGIFIFICANAIL) threads the bilayer. Over 148–491 (HENRDKETKI…LKRGTSETRF (344 aa)) the chain is Cytoplasmic. Serine 350 carries the phosphoserine modification.

It belongs to the TMEM200 family. As to expression, expressed in cerebellum.

The protein resides in the membrane. This is Transmembrane protein 200A (TMEM200A) from Homo sapiens (Human).